The primary structure comprises 425 residues: Keratin, type II cytoskeletal I (425 aa).

Positions 1–16 are coil 1A; that stretch reads FLEQQNKVLETKWKLL. The region spanning 1–296 is the IF rod domain; that stretch reads FLEQQNKVLE…YMLEGEEGRI (296 aa). Positions 17–37 are linker 1; that stretch reads QEQGTKGTTKRANLDPLFEKY. Residues 38 to 129 are coil 1B; the sequence is IADLKKYLDN…TRDAAELSQV (92 aa). A linker 12 region spans residues 130 to 153; the sequence is HDQVTDTSVVLTMDNNRDLNLDSI. The tract at residues 154-292 is coil 2; the sequence is IKEVKCQYEQ…STYRYMLEGE (139 aa). A tail region spans residues 293-425; the sequence is EGRISGQIVN…STTSTTKKTY (133 aa).

The protein belongs to the intermediate filament family. Heterotetramer of two type I and two type II keratins.

The sequence is that of Keratin, type II cytoskeletal I from Xenopus laevis (African clawed frog).